A 549-amino-acid polypeptide reads, in one-letter code: Glucose-6-phosphate isomerase (549 aa).

Glutamate 353 serves as the catalytic Proton donor. Active-site residues include histidine 384 and lysine 510.

This sequence belongs to the GPI family.

The protein resides in the cytoplasm. It catalyses the reaction alpha-D-glucose 6-phosphate = beta-D-fructose 6-phosphate. Its pathway is carbohydrate biosynthesis; gluconeogenesis. It participates in carbohydrate degradation; glycolysis; D-glyceraldehyde 3-phosphate and glycerone phosphate from D-glucose: step 2/4. In terms of biological role, catalyzes the reversible isomerization of glucose-6-phosphate to fructose-6-phosphate. This chain is Glucose-6-phosphate isomerase, found in Mycolicibacterium smegmatis (Mycobacterium smegmatis).